Here is an 81-residue protein sequence, read N- to C-terminus: Conotoxin ArMKLT2-01 (81 aa).

Positions 1–19 are cleaved as a signal peptide; the sequence is MKLTCVIIVVALFLTACHA. Positions 20-43 are excised as a propeptide; sequence KDKQEHPAVRGSDDMQDSEDLKLA. Intrachain disulfides connect Cys-46–Cys-61, Cys-53–Cys-65, and Cys-60–Cys-74.

Belongs to the conotoxin O1 superfamily. In terms of tissue distribution, expressed by the venom duct.

The protein localises to the secreted. This Conus arenatus (Sand-dusted cone) protein is Conotoxin ArMKLT2-01.